An 88-amino-acid polypeptide reads, in one-letter code: Conotoxin MaIr34 (88 aa).

A signal peptide spans Met1–Ala21. The propeptide occupies Asp22–Asn53. Intrachain disulfides connect Cys57-Cys75, Cys64-Cys79, and Cys74-Cys83.

Belongs to the conotoxin O1 superfamily. As to expression, expressed by the venom duct.

The protein resides in the secreted. The sequence is that of Conotoxin MaIr34 from Conus marmoreus (Marble cone).